The primary structure comprises 63 residues: Large ribosomal subunit protein bL28 (63 aa).

The protein belongs to the bacterial ribosomal protein bL28 family.

The chain is Large ribosomal subunit protein bL28 from Clostridium kluyveri (strain NBRC 12016).